A 338-amino-acid polypeptide reads, in one-letter code: Lipoate-protein ligase A (338 aa).

The BPL/LPL catalytic domain maps to 29-216 (PATQRVLFLW…AFFAHYGERV (188 aa)). Residues Arg-71, 76–79 (GAVF), and Lys-134 each bind ATP. Lys-134 lines the (R)-lipoate pocket.

It belongs to the LplA family. Monomer.

The protein resides in the cytoplasm. It catalyses the reaction L-lysyl-[lipoyl-carrier protein] + (R)-lipoate + ATP = N(6)-[(R)-lipoyl]-L-lysyl-[lipoyl-carrier protein] + AMP + diphosphate + H(+). It participates in protein modification; protein lipoylation via exogenous pathway; protein N(6)-(lipoyl)lysine from lipoate: step 1/2. The protein operates within protein modification; protein lipoylation via exogenous pathway; protein N(6)-(lipoyl)lysine from lipoate: step 2/2. Catalyzes both the ATP-dependent activation of exogenously supplied lipoate to lipoyl-AMP and the transfer of the activated lipoyl onto the lipoyl domains of lipoate-dependent enzymes. The sequence is that of Lipoate-protein ligase A from Escherichia coli O1:K1 / APEC.